The sequence spans 399 residues: Phosphoglycerate kinase (399 aa).

Residues 20-22, Arg35, 58-61, Arg117, and Arg154 contribute to the substrate site; these read DFN and HLGR. Residues Lys204, Gly295, Glu326, and 355–358 contribute to the ATP site; that span reads GGDS.

This sequence belongs to the phosphoglycerate kinase family. As to quaternary structure, monomer.

Its subcellular location is the cytoplasm. The enzyme catalyses (2R)-3-phosphoglycerate + ATP = (2R)-3-phospho-glyceroyl phosphate + ADP. It participates in carbohydrate degradation; glycolysis; pyruvate from D-glyceraldehyde 3-phosphate: step 2/5. The sequence is that of Phosphoglycerate kinase from Beutenbergia cavernae (strain ATCC BAA-8 / DSM 12333 / CCUG 43141 / JCM 11478 / NBRC 16432 / NCIMB 13614 / HKI 0122).